The sequence spans 420 residues: MVSKALLRLVSAVNRRRMKLLLGIALLAYVASVWGNFVNMRSIQENGELKIESKIEEMVEPLREKIRDLEKSFTQKYPPVKFLSEKDRKRILITGGAGFVGSHLTDKLMMDGHEVTVVDNFFTGRKRNVEHWIGHENFELINHDVVEPLYIEVDQIYHLASPASPPNYMYNPIKTLKTNTIGTLNMLGLAKRVGARLLLASTSEVYGDPEVHPQSEDYWGHVNPIGPRACYDEGKRVAETMCYAYMKQEGVEVRVARIFNTFGPRMHMNDGRVVSNFILQALQGEPLTVYGSGSQTRAFQYVSDLVNGLVALMNSNVSSPVNLGNPEEHTILEFAQLIKNLVGSGSEIQFLSEAQDDPQKRKPDIKKAKLMLGWEPVVPLEEGLNKAIHYFRKELEYQANNQYIPKPKPARIKKGRTRHS.

The residue at position 1 (methionine 1) is an N-acetylmethionine. The Cytoplasmic segment spans residues 1 to 19 (MVSKALLRLVSAVNRRRMK). Residues 20–40 (LLLGIALLAYVASVWGNFVNM) traverse the membrane as a helical; Signal-anchor for type II membrane protein segment. At 41–420 (RSIQENGELK…RIKKGRTRHS (380 aa)) the chain is on the lumenal side. Threonine 94 bears the Phosphothreonine mark. The NAD(+) site is built by glycine 98, phenylalanine 99, valine 100, aspartate 119, asparagine 120, phenylalanine 122, threonine 123, glycine 124, aspartate 144, and valine 145. Positions 149 and 150 each coordinate UDP-alpha-D-glucuronate. The NAD(+) site is built by leucine 159 and serine 161. Lysine 177 is a UDP-alpha-D-glucuronate binding site. Residue threonine 178 participates in NAD(+) binding. Residues asparagine 185, glycine 188, lysine 191, and arginine 192 each coordinate UDP-alpha-D-glucuronate. Positions 200, 231, and 235 each coordinate NAD(+). The active-site Proton acceptor is tyrosine 231. Residues tyrosine 245, glutamine 248, and glutamate 249 each contribute to the UDP-alpha-D-glucuronate site. Threonine 261, histidine 267, and arginine 272 together coordinate NAD(+). Asparagine 316 carries an N-linked (GlcNAc...) asparagine glycan.

This sequence belongs to the NAD(P)-dependent epimerase/dehydratase family. UDP-glucuronic acid decarboxylase subfamily. In terms of assembly, homodimer and homotetramer. Interacts with AKT1. Requires NAD(+) as cofactor.

It localises to the golgi apparatus. The protein resides in the golgi stack membrane. It catalyses the reaction UDP-alpha-D-glucuronate + H(+) = UDP-alpha-D-xylose + CO2. It functions in the pathway nucleotide-sugar biosynthesis; UDP-alpha-D-xylose biosynthesis; UDP-alpha-D-xylose from UDP-alpha-D-glucuronate: step 1/1. Functionally, catalyzes the NAD-dependent decarboxylation of UDP-glucuronic acid to UDP-xylose. Necessary for the biosynthesis of the core tetrasaccharide in glycosaminoglycan biosynthesis. In Homo sapiens (Human), this protein is UDP-glucuronic acid decarboxylase 1.